Here is a 55-residue protein sequence, read N- to C-terminus: Conotoxin Cal22b (55 aa).

Positions 1 to 5 (GRPSA) are excised as a propeptide.

Contains 4 disulfide bonds. In terms of tissue distribution, expressed by the venom duct.

It is found in the secreted. In terms of biological role, probable neurotoxin with unknown target. Possibly targets ion channels. The polypeptide is Conotoxin Cal22b (Californiconus californicus (California cone)).